Consider the following 371-residue polypeptide: tRNA-specific 2-thiouridylase MnmA (371 aa).

ATP contacts are provided by residues 13–20 and Met-39; that span reads GMSGGVDS. Positions 99–101 are interaction with target base in tRNA; it reads NPD. The active-site Nucleophile is Cys-104. Cys-104 and Cys-200 are oxidised to a cystine. Residue Gly-128 coordinates ATP. The interaction with tRNA stretch occupies residues 150 to 152; the sequence is KDQ. Catalysis depends on Cys-200, which acts as the Cysteine persulfide intermediate. Residues 308–309 form an interaction with tRNA region; the sequence is RY.

The protein belongs to the MnmA/TRMU family.

The protein localises to the cytoplasm. The catalysed reaction is S-sulfanyl-L-cysteinyl-[protein] + uridine(34) in tRNA + AH2 + ATP = 2-thiouridine(34) in tRNA + L-cysteinyl-[protein] + A + AMP + diphosphate + H(+). Catalyzes the 2-thiolation of uridine at the wobble position (U34) of tRNA, leading to the formation of s(2)U34. The chain is tRNA-specific 2-thiouridylase MnmA from Listeria monocytogenes serotype 4b (strain CLIP80459).